Reading from the N-terminus, the 413-residue chain is Aspartate aminotransferase, cytoplasmic (413 aa).

L-aspartate-binding residues include Gly39, Trp141, and Asn195. Lys259 bears the N6-(pyridoxal phosphate)lysine mark. Arg387 serves as a coordination point for L-aspartate.

Belongs to the class-I pyridoxal-phosphate-dependent aminotransferase family. As to quaternary structure, homodimer. Pyridoxal 5'-phosphate serves as cofactor.

It localises to the cytoplasm. It catalyses the reaction L-aspartate + 2-oxoglutarate = oxaloacetate + L-glutamate. The catalysed reaction is L-cysteine + 2-oxoglutarate = 2-oxo-3-sulfanylpropanoate + L-glutamate. The enzyme catalyses (2S)-2-aminobutanoate + 2-oxoglutarate = 2-oxobutanoate + L-glutamate. It carries out the reaction 3-sulfino-L-alanine + 2-oxoglutarate = 3-sulfinopyruvate + L-glutamate. Functionally, biosynthesis of L-glutamate from L-aspartate or L-cysteine. Important regulator of levels of glutamate, the major excitatory neurotransmitter of the vertebrate central nervous system. Acts as a scavenger of glutamate in brain neuroprotection. The aspartate aminotransferase activity is involved in hepatic glucose synthesis during development and in adipocyte glyceroneogenesis. Using L-cysteine as substrate, regulates levels of mercaptopyruvate, an important source of hydrogen sulfide. Mercaptopyruvate is converted into H(2)S via the action of 3-mercaptopyruvate sulfurtransferase (3MST). Hydrogen sulfide is an important synaptic modulator and neuroprotectant in the brain. The polypeptide is Aspartate aminotransferase, cytoplasmic (Bos taurus (Bovine)).